We begin with the raw amino-acid sequence, 316 residues long: Protoheme IX farnesyltransferase 2 (316 aa).

Residues 1–15 show a composition bias toward polar residues; that stretch reads MEQNLNSEQKPQSSA. The segment at 1 to 24 is disordered; sequence MEQNLNSEQKPQSSAKPRGKSSRS. The next 7 membrane-spanning stretches (helical) occupy residues 62–82, 117–137, 163–183, 188–208, 231–251, 252–272, and 293–313; these read IPEMIFSTVGSALVIGAAGAF, IVMLIIGLAVLALASPLAAAF, IGSISGAVPPLIGWSAVSTDI, IARFIFVMVIWQMPHFYAIAI, TYYQTNFYLILLILSSFLFGS, LSVGIMLVALLLSIAWLVMSI, and LFHMTILFTTVIVYSLVGVIF.

Belongs to the UbiA prenyltransferase family. Protoheme IX farnesyltransferase subfamily. In terms of assembly, interacts with CtaA.

The protein resides in the cell membrane. The enzyme catalyses heme b + (2E,6E)-farnesyl diphosphate + H2O = Fe(II)-heme o + diphosphate. The protein operates within porphyrin-containing compound metabolism; heme O biosynthesis; heme O from protoheme: step 1/1. Functionally, converts heme B (protoheme IX) to heme O by substitution of the vinyl group on carbon 2 of heme B porphyrin ring with a hydroxyethyl farnesyl side group. In Lysinibacillus sphaericus (strain C3-41), this protein is Protoheme IX farnesyltransferase 2.